Reading from the N-terminus, the 1024-residue chain is Beta-galactosidase 2 (1024 aa).

Substrate is bound by residues asparagine 103 and aspartate 202. Aspartate 202 is a Na(+) binding site. 3 residues coordinate Mg(2+): glutamate 417, histidine 419, and glutamate 462. Substrate contacts are provided by residues glutamate 462 and 538 to 541 (EYAH). Glutamate 462 functions as the Proton donor in the catalytic mechanism. Glutamate 538 functions as the Nucleophile in the catalytic mechanism. Asparagine 598 is a binding site for Mg(2+). Na(+) is bound by residues phenylalanine 602 and asparagine 605. Residues asparagine 605 and tryptophan 1000 each contribute to the substrate site.

This sequence belongs to the glycosyl hydrolase 2 family. As to quaternary structure, homotetramer. Requires Mg(2+) as cofactor. Na(+) serves as cofactor.

The enzyme catalyses Hydrolysis of terminal non-reducing beta-D-galactose residues in beta-D-galactosides.. This Klebsiella pneumoniae subsp. pneumoniae (strain ATCC 700721 / MGH 78578) protein is Beta-galactosidase 2.